The sequence spans 503 residues: Ferulic acid decarboxylase 1 (503 aa).

Mn(2+)-binding residues include Asn170, His193, and Glu236. Prenylated FMN-binding positions include 170-175 (NWSIAR), 192-193 (QH), and Glu236. Glu285 functions as the Proton donor in the catalytic mechanism. Residue Lys394 participates in prenylated FMN binding.

This sequence belongs to the UbiD family. UbiD-like/FDC subfamily. In terms of assembly, homodimer. May form higher order oligomers. The cofactor is Mn(2+). Prenylated FMN is required as a cofactor.

It localises to the cytoplasm. It catalyses the reaction (E)-4-coumarate + H(+) = 4-vinylphenol + CO2. The catalysed reaction is (E)-cinnamate + H(+) = styrene + CO2. The enzyme catalyses (E)-ferulate + H(+) = 2-methoxy-4-vinylphenol + CO2. In terms of biological role, catalyzes the reversible decarboxylation of aromatic carboxylic acids like ferulic acid, p-coumaric acid or cinnamic acid, producing the corresponding vinyl derivatives 4-vinylphenol, 4-vinylguaiacol, and styrene, respectively, which play the role of aroma metabolites. Not essential for ubiquinone synthesis. This is Ferulic acid decarboxylase 1 from Saccharomyces cerevisiae (strain ATCC 204508 / S288c) (Baker's yeast).